Reading from the N-terminus, the 347-residue chain is Fructose-1,6-bisphosphatase class 1 (347 aa).

Mg(2+) contacts are provided by Glu-106, Asp-128, Ile-130, and Asp-131. Substrate-binding positions include 131 to 134 (DGSS), Asn-223, Tyr-251, and Lys-281. Mg(2+) is bound at residue Glu-287.

Belongs to the FBPase class 1 family. In terms of assembly, homotetramer. It depends on Mg(2+) as a cofactor.

Its subcellular location is the cytoplasm. The enzyme catalyses beta-D-fructose 1,6-bisphosphate + H2O = beta-D-fructose 6-phosphate + phosphate. The protein operates within carbohydrate biosynthesis; Calvin cycle. The sequence is that of Fructose-1,6-bisphosphatase class 1 from Synechocystis sp. (strain ATCC 27184 / PCC 6803 / Kazusa).